An 87-amino-acid chain; its full sequence is Mitochondrial import inner membrane translocase subunit TIM9 (87 aa).

Methionine 1 carries the N-acetylmethionine modification. Positions 35–59 match the Twin CX3C motif motif; it reads CFTDCVNDFTTSKLTNKEQTCIMKC. Intrachain disulfides connect cysteine 35–cysteine 59 and cysteine 39–cysteine 55.

Belongs to the small Tim family. As to quaternary structure, heterohexamer; composed of 3 copies of TIM9 and 3 copies of TIM10, named soluble 70 kDa complex. Associates with the TIM12 component of the TIM22 complex, whose core is composed of TIM18, TIM22 and TIM54. Interacts with the transmembrane regions of multi-pass transmembrane proteins in transit.

It localises to the mitochondrion inner membrane. Its subcellular location is the mitochondrion intermembrane space. In terms of biological role, mitochondrial intermembrane chaperone that participates in the import and insertion of multi-pass transmembrane proteins into the mitochondrial inner membrane. Also required for the transfer of beta-barrel precursors from the TOM complex to the sorting and assembly machinery (SAM complex) of the outer membrane. Acts as a chaperone-like protein that protects the hydrophobic precursors from aggregation and guide them through the mitochondrial intermembrane space. Compared to TIM10, it may have a strong structural role. The sequence is that of Mitochondrial import inner membrane translocase subunit TIM9 (TIM9) from Saccharomyces cerevisiae (strain ATCC 204508 / S288c) (Baker's yeast).